The sequence spans 724 residues: Methionine--tRNA ligase (724 aa).

A 'HIGH' region motif is present at residues 12–22 (PYVNNIPHLGN). Zn(2+) contacts are provided by cysteine 143, cysteine 146, cysteine 155, and cysteine 158. A 'KMSKS' region motif is present at residues 330–334 (KFSKS). Position 333 (lysine 333) interacts with ATP. One can recognise a tRNA-binding domain in the interval 560–665 (FREKVLLKVV…KNPIPGERII (106 aa)).

This sequence belongs to the class-I aminoacyl-tRNA synthetase family. MetG type 1 subfamily. In terms of assembly, homodimer. Zn(2+) serves as cofactor.

The protein localises to the cytoplasm. The enzyme catalyses tRNA(Met) + L-methionine + ATP = L-methionyl-tRNA(Met) + AMP + diphosphate. Is required not only for elongation of protein synthesis but also for the initiation of all mRNA translation through initiator tRNA(fMet) aminoacylation. In Borrelia garinii subsp. bavariensis (strain ATCC BAA-2496 / DSM 23469 / PBi) (Borreliella bavariensis), this protein is Methionine--tRNA ligase.